A 303-amino-acid chain; its full sequence is Putative S-adenosyl-L-methionine-dependent methyltransferase ML2020 (303 aa).

S-adenosyl-L-methionine contacts are provided by residues Asp-130 and 159–160 (DL).

Belongs to the UPF0677 family.

Exhibits S-adenosyl-L-methionine-dependent methyltransferase activity. The sequence is that of Putative S-adenosyl-L-methionine-dependent methyltransferase ML2020 from Mycobacterium leprae (strain TN).